Here is a 621-residue protein sequence, read N- to C-terminus: UvrABC system protein C (621 aa).

One can recognise a GIY-YIG domain in the interval threonine 11–isoleucine 90. The UVR domain occupies lysine 200–threonine 235.

It belongs to the UvrC family. As to quaternary structure, interacts with UvrB in an incision complex.

It localises to the cytoplasm. Functionally, the UvrABC repair system catalyzes the recognition and processing of DNA lesions. UvrC both incises the 5' and 3' sides of the lesion. The N-terminal half is responsible for the 3' incision and the C-terminal half is responsible for the 5' incision. In Lawsonia intracellularis (strain PHE/MN1-00), this protein is UvrABC system protein C.